We begin with the raw amino-acid sequence, 930 residues long: Protocadherin gamma-B6 (930 aa).

Residues 1 to 30 (MGGSCAQRRRAGPRQVLFPLLLPLFYPTLS) form the signal peptide. 6 consecutive Cadherin domains span residues 31–133 (EPIR…APQF), 134–242 (DKKE…PPVF), 243–347 (SRDE…SPEI), 348–452 (IITS…APVF), 453–562 (DQTS…APRV), and 570–675 (DGSA…LPDL). Residues 31-691 (EPIRYSIPEE…SDPQAELQFY (661 aa)) are Extracellular-facing. 3 N-linked (GlcNAc...) asparagine glycosylation sites follow: asparagine 304, asparagine 419, and asparagine 545. The chain crosses the membrane as a helical span at residues 692–712 (LVVALALISVLFLLAVILAIA). Residues 713-930 (LRLRRSLSPA…KKKSGKKEKK (218 aa)) are Cytoplasmic-facing. 2 disordered regions span residues 791–839 (PHGG…WPNN) and 900–930 (ATLTNAAGKRDGKAPAGGNGNKKKSGKKEKK). Residues 800–839 (HPETLTSQAPPNTDWRFSQAQRPGTSGSQNGDDTGTWPNN) are compositionally biased toward polar residues. A compositionally biased stretch (basic residues) spans 920-930 (NKKKSGKKEKK).

It localises to the cell membrane. Functionally, potential calcium-dependent cell-adhesion protein. May be involved in the establishment and maintenance of specific neuronal connections in the brain. The chain is Protocadherin gamma-B6 (PCDHGB6) from Homo sapiens (Human).